The following is a 148-amino-acid chain: Large ribosomal subunit protein bL9 (148 aa).

The tract at residues 46–65 is disordered; sequence QLQQQNKHAEQEREQEIEDA. The segment covering 52-65 has biased composition (basic and acidic residues); the sequence is KHAEQEREQEIEDA.

It belongs to the bacterial ribosomal protein bL9 family.

Functionally, binds to the 23S rRNA. This Staphylococcus carnosus (strain TM300) protein is Large ribosomal subunit protein bL9.